The following is a 125-amino-acid chain: MARLAGVDLPREKRMEIALTYIYGIGRTRSKEILRATDISFDVRPKDLDDDQLAKLREALENYRLEGDLRREVQADIRRKIEIGCYQGLRHRRHLPVHGQRTKTNARTRKGPKKTVAGKKKAGKK.

The segment at 92-125 (RRHLPVHGQRTKTNARTRKGPKKTVAGKKKAGKK) is disordered.

This sequence belongs to the universal ribosomal protein uS13 family. As to quaternary structure, part of the 30S ribosomal subunit. Forms a loose heterodimer with protein S19. Forms two bridges to the 50S subunit in the 70S ribosome.

Located at the top of the head of the 30S subunit, it contacts several helices of the 16S rRNA. In the 70S ribosome it contacts the 23S rRNA (bridge B1a) and protein L5 of the 50S subunit (bridge B1b), connecting the 2 subunits; these bridges are implicated in subunit movement. Contacts the tRNAs in the A and P-sites. The chain is Small ribosomal subunit protein uS13 from Saccharopolyspora erythraea (strain ATCC 11635 / DSM 40517 / JCM 4748 / NBRC 13426 / NCIMB 8594 / NRRL 2338).